The chain runs to 127 residues: MSLLRNRLQDLPALCLCVLVLACIGACQSEAHEETPSPPPKLKMSHWSLVTGRMKELLEPVVNRTRDRWQWFWSPSTFRGFMQTYYDDHLRDLGPRTKAWLLKSKDSLLNKTHSLCPRIVCGDKDQG.

A signal peptide spans 1 to 27 (MSLLRNRLQDLPALCLCVLVLACIGAC). Asn63 carries N-linked (GlcNAc...) asparagine glycosylation.

The protein belongs to the apolipoprotein C4 family.

It is found in the secreted. In terms of biological role, may participate in lipoprotein metabolism. This chain is Apolipoprotein C-IV (APOC4), found in Colobus guereza (Mantled guereza).